Reading from the N-terminus, the 325-residue chain is MIVVGIDHGTSGITACVMENKTVKSIFKMKRTEINENSFLKELEKHVNLNDIDLMGVCYSMGDGIDKITDIKKVENRGVINLEGIGKKVGGGTKVYDEIKSSNIPAVVIPGLHKGVKSMDERFNALFSHIASPEKISICYNAYKTFGFENFILSDISSNTVTLLIKNGKIFGGFDACVGAVGILHGPIDLELIRNIDSKKITANEAFSKAGVVKITDSYKGVEDTKFEIMSNYKKDKKCTLAVDSLVLSVSMEINSLMFLNHDKNVVLAGSIGTWKNPNISEMIKENIDGNVLVLDGDSGAVGSAMIAEDILNGKREILGISVDF.

The protein belongs to the UPF0285 family.

This Methanococcus maripaludis (strain C7 / ATCC BAA-1331) protein is UPF0285 protein MmarC7_1666.